The primary structure comprises 433 residues: D-amino acid dehydrogenase (433 aa).

Residue 3 to 17 coordinates FAD; the sequence is VLVLGSGVIGTTSAY.

Belongs to the DadA oxidoreductase family. It depends on FAD as a cofactor.

It carries out the reaction a D-alpha-amino acid + A + H2O = a 2-oxocarboxylate + AH2 + NH4(+). The protein operates within amino-acid degradation; D-alanine degradation; NH(3) and pyruvate from D-alanine: step 1/1. Its function is as follows. Oxidative deamination of D-amino acids. This Pseudomonas savastanoi pv. phaseolicola (strain 1448A / Race 6) (Pseudomonas syringae pv. phaseolicola (strain 1448A / Race 6)) protein is D-amino acid dehydrogenase.